The chain runs to 506 residues: Maturase K (506 aa).

This sequence belongs to the intron maturase 2 family. MatK subfamily.

The protein localises to the plastid. The protein resides in the chloroplast. Its function is as follows. Usually encoded in the trnK tRNA gene intron. Probably assists in splicing its own and other chloroplast group II introns. This is Maturase K from Olea europaea (Common olive).